Here is a 146-residue protein sequence, read N- to C-terminus: Anti-sigma F factor (146 aa).

This sequence belongs to the anti-sigma-factor family.

It carries out the reaction L-seryl-[protein] + ATP = O-phospho-L-seryl-[protein] + ADP + H(+). The enzyme catalyses L-threonyl-[protein] + ATP = O-phospho-L-threonyl-[protein] + ADP + H(+). Its function is as follows. Binds to sigma F and blocks its ability to form an RNA polymerase holoenzyme (E-sigma F). Phosphorylates SpoIIAA on a serine residue. This phosphorylation may enable SpoIIAA to act as an anti-anti-sigma factor that counteracts SpoIIAB and thus releases sigma F from inhibition. In Halalkalibacterium halodurans (strain ATCC BAA-125 / DSM 18197 / FERM 7344 / JCM 9153 / C-125) (Bacillus halodurans), this protein is Anti-sigma F factor.